We begin with the raw amino-acid sequence, 432 residues long: Enolase (432 aa).

Residue Q167 coordinates (2R)-2-phosphoglycerate. E209 serves as the catalytic Proton donor. Mg(2+) is bound by residues D246, E291, and D318. The (2R)-2-phosphoglycerate site is built by K343, R372, S373, and K394. K343 serves as the catalytic Proton acceptor.

This sequence belongs to the enolase family. As to quaternary structure, component of the RNA degradosome, a multiprotein complex involved in RNA processing and mRNA degradation. It depends on Mg(2+) as a cofactor.

The protein resides in the cytoplasm. The protein localises to the secreted. It is found in the cell surface. It catalyses the reaction (2R)-2-phosphoglycerate = phosphoenolpyruvate + H2O. It functions in the pathway carbohydrate degradation; glycolysis; pyruvate from D-glyceraldehyde 3-phosphate: step 4/5. Its function is as follows. Catalyzes the reversible conversion of 2-phosphoglycerate (2-PG) into phosphoenolpyruvate (PEP). It is essential for the degradation of carbohydrates via glycolysis. In Buchnera aphidicola subsp. Cinara cedri (strain Cc), this protein is Enolase.